The sequence spans 293 residues: N-acetylneuraminate lyase (293 aa).

Positions 47 and 48 each coordinate aceneuramate. Y136 functions as the Proton donor in the catalytic mechanism. K164 acts as the Schiff-base intermediate with substrate in catalysis. 5 residues coordinate aceneuramate: T166, G188, D190, E191, and S207.

Belongs to the DapA family. NanA subfamily. As to quaternary structure, homotetramer.

The protein localises to the cytoplasm. It catalyses the reaction aceneuramate = aldehydo-N-acetyl-D-mannosamine + pyruvate. The protein operates within amino-sugar metabolism; N-acetylneuraminate degradation; D-fructose 6-phosphate from N-acetylneuraminate: step 1/5. Catalyzes the reversible aldol cleavage of N-acetylneuraminic acid (sialic acid; Neu5Ac) to form pyruvate and N-acetylmannosamine (ManNAc) via a Schiff base intermediate. The protein is N-acetylneuraminate lyase of Haemophilus influenzae (strain ATCC 51907 / DSM 11121 / KW20 / Rd).